A 258-amino-acid chain; its full sequence is Spindlin-2B (258 aa).

A compositionally biased stretch (low complexity) spans 1–23 (MKTPNAQEAEGQQTRAAAGRATG). The disordered stretch occupies residues 1-49 (MKTPNAQEAEGQQTRAAAGRATGSANMTKKKVSQKKQRGRPSSQPRRNI). Residues 28–39 (TKKKVSQKKQRG) show a composition bias toward basic residues. 3 tudor-like domain regions span residues 50 to 99 (VGCR…LELH), 129 to 178 (IGKA…YQLL), and 210 to 255 (IGKH…YDLV). Histone H3K4me3 and H3R8me2a binding regions lie at residues Glu-138 and 246-248 (DFH).

This sequence belongs to the SPIN/STSY family. As to quaternary structure, interacts with C11orf84/SPINDOC. As to expression, detected in all the examined tissues with highest expression in liver, followed by heart, stomach, kidney, skeletal muscle, placenta, and pancreas.

The protein resides in the nucleus. Its function is as follows. Involved in the regulation of cell cycle progression, this activity is related to the inhibition of apoptosis following the removal of essential growth factors. Exhibits H3K4me3-binding activity. The protein is Spindlin-2B (SPIN2B) of Homo sapiens (Human).